We begin with the raw amino-acid sequence, 1703 residues long: Pecanex-like protein 1 (1703 aa).

2 helical membrane passes run 31 to 53 (VNALHLYIWLFLLCFPFTLYMAL) and 57 to 74 (MVIVGIYCGVIAAMFLLL). The span at 91-100 (VEHQTRESKG) shows a compositional bias: basic and acidic residues. The segment at 91–126 (VEHQTRESKGSRGGTGGANDPVTRREDSNGLGDPGG) is disordered. Residue Asn-256 is glycosylated (N-linked (GlcNAc...) asparagine). 3 consecutive transmembrane segments (helical) span residues 416-438 (VLAVVLAVLVAFLGSVLLIHGFF), 477-499 (AYSRPVYFCLCCGLIWLLHYGSL), and 525-547 (LVIVFTLCFPIIFFVGLLPQVNT). N-linked (GlcNAc...) asparagine glycosylation occurs at Asn-564. The next 4 membrane-spanning stretches (helical) occupy residues 569–591 (LLSALYSILRSIVTVALLYCFCY), 603–622 (IPVLFSVFCGLLVAVSYHLS), 675–697 (LIVCVVIAVLYFAIHVSTVFIAL), and 704–721 (VLYGLLGAVGLLTHYLLP). 3 N-linked (GlcNAc...) asparagine glycosylation sites follow: Asn-988, Asn-1129, and Asn-1391. 2 disordered regions span residues 1475–1556 (VQSG…HSIP) and 1577–1598 (TDPLSQHHHPHHHPQQHNPTHA). Composition is skewed to low complexity over residues 1485 to 1510 (ARASVVSQSSSYRYSSSRHSSLRTST) and 1518 to 1556 (RSSTSQLSLRTLPTSLQLRLGSTSDPAGPSSSLSSHSIP). Residues 1582–1591 (QHHHPHHHPQ) are compositionally biased toward basic residues. Asn-1622 is a glycosylation site (N-linked (GlcNAc...) asparagine).

This sequence belongs to the pecanex family.

It is found in the membrane. This Takifugu rubripes (Japanese pufferfish) protein is Pecanex-like protein 1.